Here is a 545-residue protein sequence, read N- to C-terminus: High-affinity glucose transporter 1 (545 aa).

The next 9 helical transmembrane spans lie at 29–49, 72–92, 100–120, 125–145, 157–177, 192–212, 291–311, 317–337, and 345–365; these read VFFI…DISS, GFIT…SSFV, LSLL…SSVQ, LIIG…VAPV, GLIG…MFYL, IAWG…FFIP, LTGM…AGYS, VASS…LYFI, and LLIG…GILG. N-linked (GlcNAc...) asparagine glycans are attached at residues asparagine 376 and asparagine 387. 2 helical membrane passes run 395 to 415 and 433 to 453; these read IACC…GIWV and ISTS…PTGF. The N-linked (GlcNAc...) asparagine glycan is linked to asparagine 455. A helical transmembrane segment spans residues 460 to 480; it reads TYIIYGVFCFAMATHVYFGFP. Positions 524 to 545 are disordered; the sequence is VEHEEDKLMNEDSNSESRENQA.

The protein belongs to the major facilitator superfamily. Sugar transporter (TC 2.A.1.1) family. Interacts with the human complement factors FH and C4BP. Also binds human immunodeficiency virus (HIV) protein gp160.

The protein localises to the cell membrane. High-affinity glucose transporter. Acts as a multifunctional complement-evasion molecule that causes down-regulation of complement activation by acquisition of human complement factors FH and C4BP. Also functions as a human immunodeficiency virus (HIV) receptor via binding the viral gp160 protein. Modulates hyphae formation. The chain is High-affinity glucose transporter 1 from Candida albicans (strain SC5314 / ATCC MYA-2876) (Yeast).